A 325-amino-acid chain; its full sequence is Serine/threonine-protein phosphatase 2A activator 1 (325 aa).

This sequence belongs to the PTPA-type PPIase family.

It is found in the cytoplasm. It localises to the nucleus. It carries out the reaction [protein]-peptidylproline (omega=180) = [protein]-peptidylproline (omega=0). PPIases accelerate the folding of proteins. It catalyzes the cis-trans isomerization of proline imidic peptide bonds in oligopeptides. Acts as a regulatory subunit for PP2A-like phosphatases modulating their activity or substrate specificity, probably by inducing a conformational change in the catalytic subunit, a direct target of the PPIase. Can reactivate inactive phosphatase PP2A-phosphatase methylesterase complexes (PP2Ai) in presence of ATP and Mg(2+) by dissociating the inactive form from the complex. The chain is Serine/threonine-protein phosphatase 2A activator 1 (rrd1) from Schizosaccharomyces pombe (strain 972 / ATCC 24843) (Fission yeast).